The sequence spans 375 residues: Aminomethyltransferase (375 aa).

This sequence belongs to the GcvT family. In terms of assembly, the glycine cleavage system is composed of four proteins: P, T, L and H.

It catalyses the reaction N(6)-[(R)-S(8)-aminomethyldihydrolipoyl]-L-lysyl-[protein] + (6S)-5,6,7,8-tetrahydrofolate = N(6)-[(R)-dihydrolipoyl]-L-lysyl-[protein] + (6R)-5,10-methylene-5,6,7,8-tetrahydrofolate + NH4(+). Functionally, the glycine cleavage system catalyzes the degradation of glycine. The chain is Aminomethyltransferase from Ralstonia pickettii (strain 12J).